A 272-amino-acid polypeptide reads, in one-letter code: Eukaryotic translation initiation factor 3 subunit G (272 aa).

Disordered regions lie at residues 1 to 28 (MPALDEIKSSWADEVELDSGSLPPPTEI) and 157 to 188 (APTTAKSGKYVPPSMRDSQKPGMGGNPRGRDD). An RRM domain is found at 190-268 (TAIRISNLSE…LILNVEWSKP (79 aa)).

This sequence belongs to the eIF-3 subunit G family. Component of the eukaryotic translation initiation factor 3 (eIF-3) complex.

The protein resides in the cytoplasm. Its function is as follows. RNA-binding component of the eukaryotic translation initiation factor 3 (eIF-3) complex, which is involved in protein synthesis of a specialized repertoire of mRNAs and, together with other initiation factors, stimulates binding of mRNA and methionyl-tRNAi to the 40S ribosome. The eIF-3 complex specifically targets and initiates translation of a subset of mRNAs involved in cell proliferation. This subunit can bind 18S rRNA. The polypeptide is Eukaryotic translation initiation factor 3 subunit G (Aedes aegypti (Yellowfever mosquito)).